The primary structure comprises 70 residues: uncharacterized protein (70 aa).

This is an uncharacterized protein from Escherichia coli O157:H7.